The chain runs to 266 residues: Apolipoprotein A-I (266 aa).

The N-terminal stretch at Met-1 to Ala-18 is a signal peptide. 2 tandem repeats follow at residues Leu-67–Gly-88 and Pro-89–Ser-110. The interval Leu-67–Gln-266 is 10 X approximate tandem repeats. A Methionine sulfoxide modification is found at Met-109. The stretch at Lys-111–Gln-121 is one 3; half-length repeat. A run of 5 repeats spans residues Pro-122–Ala-143, Pro-144–Thr-165, Pro-166–Ala-187, Pro-188–Ser-209, and Ala-210–Lys-231. Residues Pro-232–Leu-242 form a 9; half-length repeat. The stretch at Pro-243–Gln-266 is repeat 10.

It belongs to the apolipoprotein A1/A4/E family. In terms of assembly, homodimer. Interacts with APOA1BP and CLU. Component of a sperm activating protein complex (SPAP), consisting of APOA1, an immunoglobulin heavy chain, an immunoglobulin light chain and albumin. Interacts with NDRG1. Interacts with SCGB3A2. Interacts with NAXE and YJEFN3. Post-translationally, glycosylated. Palmitoylated. In terms of processing, phosphorylation sites are present in the extracellular medium.

The protein resides in the secreted. Functionally, participates in the reverse transport of cholesterol from tissues to the liver for excretion by promoting cholesterol efflux from tissues and by acting as a cofactor for the lecithin cholesterol acyltransferase (LCAT). As part of the SPAP complex, activates spermatozoa motility. The sequence is that of Apolipoprotein A-I (APOA1) from Mustela putorius furo (European domestic ferret).